The sequence spans 76 residues: Large ribosomal subunit protein uL24 (76 aa).

Belongs to the universal ribosomal protein uL24 family. Part of the 50S ribosomal subunit.

Functionally, one of two assembly initiator proteins, it binds directly to the 5'-end of the 23S rRNA, where it nucleates assembly of the 50S subunit. One of the proteins that surrounds the polypeptide exit tunnel on the outside of the subunit. The sequence is that of Large ribosomal subunit protein uL24 from Sulfurimonas denitrificans (strain ATCC 33889 / DSM 1251) (Thiomicrospira denitrificans (strain ATCC 33889 / DSM 1251)).